A 926-amino-acid polypeptide reads, in one-letter code: Isoleucine--tRNA ligase (926 aa).

A disordered region spans residues 1–21 (MKMKETLQLGKTAFPMRGNLP). A 'HIGH' region motif is present at residues 57–67 (PYANGNIHLGH). Position 552 (Glu-552) interacts with L-isoleucyl-5'-AMP. The short motif at 593-597 (KMSKS) is the 'KMSKS' region element. Lys-596 is a binding site for ATP. The Zn(2+) site is built by Cys-886, Cys-889, Cys-906, and Cys-909.

This sequence belongs to the class-I aminoacyl-tRNA synthetase family. IleS type 1 subfamily. Monomer. Zn(2+) is required as a cofactor.

Its subcellular location is the cytoplasm. The enzyme catalyses tRNA(Ile) + L-isoleucine + ATP = L-isoleucyl-tRNA(Ile) + AMP + diphosphate. Catalyzes the attachment of isoleucine to tRNA(Ile). As IleRS can inadvertently accommodate and process structurally similar amino acids such as valine, to avoid such errors it has two additional distinct tRNA(Ile)-dependent editing activities. One activity is designated as 'pretransfer' editing and involves the hydrolysis of activated Val-AMP. The other activity is designated 'posttransfer' editing and involves deacylation of mischarged Val-tRNA(Ile). This chain is Isoleucine--tRNA ligase, found in Enterococcus faecalis (strain ATCC 700802 / V583).